The sequence spans 172 residues: 3-phenylpropionate/cinnamic acid dioxygenase subunit beta (172 aa).

Belongs to the bacterial ring-hydroxylating dioxygenase beta subunit family. In terms of assembly, this dioxygenase system consists of four proteins: the two subunits of the hydroxylase component (HcaE and HcaF), a ferredoxin (HcaC) and a ferredoxin reductase (HcaD).

It catalyses the reaction 3-phenylpropanoate + NADH + O2 + H(+) = 3-(cis-5,6-dihydroxycyclohexa-1,3-dien-1-yl)propanoate + NAD(+). It carries out the reaction (E)-cinnamate + NADH + O2 + H(+) = (2E)-3-(cis-5,6-dihydroxycyclohexa-1,3-dien-1-yl)prop-2-enoate + NAD(+). The protein operates within aromatic compound metabolism; 3-phenylpropanoate degradation. Part of the multicomponent 3-phenylpropionate dioxygenase. Converts 3-phenylpropionic acid (PP) and cinnamic acid (CI) into 3-phenylpropionate-dihydrodiol (PP-dihydrodiol) and cinnamic acid-dihydrodiol (CI-dihydrodiol), respectively. This chain is 3-phenylpropionate/cinnamic acid dioxygenase subunit beta, found in Escherichia coli O17:K52:H18 (strain UMN026 / ExPEC).